A 517-amino-acid polypeptide reads, in one-letter code: Serine carboxypeptidase ctsa-3.2 (517 aa).

An N-terminal signal peptide occupies residues 1-21 (MWWTSLVFSVLLFDLIFISNC). Residue serine 172 is part of the active site. N-linked (GlcNAc...) asparagine glycosylation occurs at asparagine 269. Residues aspartate 418 and histidine 485 contribute to the active site.

The protein belongs to the peptidase S10 family.

The protein is Serine carboxypeptidase ctsa-3.2 of Caenorhabditis elegans.